We begin with the raw amino-acid sequence, 393 residues long: Seven-bladed beta-propeller protein Rv1057 (393 aa).

The interval 208-230 is disordered; that stretch reads DGGRIGSRSRSRQKSSKPRGNQA. Basic residues predominate over residues 214-224; it reads SRSRSRQKSSK.

In terms of biological role, may play an important role in host-pathogen interactions and in ESAT-6 secretion. This Mycobacterium tuberculosis (strain ATCC 25618 / H37Rv) protein is Seven-bladed beta-propeller protein Rv1057.